A 1770-amino-acid chain; its full sequence is Transposon Ty2-OR1 Gag-Pol polyprotein (1770 aa).

Composition is skewed to polar residues over residues 1 to 39 and 49 to 60; these read MESQQLSQNSPTFHGSAYASVTSKEVPSNQDPLAVSASN and KVNSQQETTPGT. Disordered regions lie at residues 1 to 88 and 359 to 449; these read MESQ…YQQH and QHSE…SNDE. The tract at residues 295–397 is RNA-binding; it reads ENNINVSDRL…SSKPRAAKAH (103 aa). Positions 369–381 are enriched in low complexity; it reads TSPNTTNTKVTTR. Polar residues-rich tracts occupy residues 399-408 and 415-435; these read IATSSKFSRV and ESTVSSQYLSDDNELSLGQQQ. D457 (for protease activity; shared with dimeric partner) is an active-site residue. The interval 579–636 is integrase-type zinc finger-like; that stretch reads NVNKSKSVNKYPYPLIHRMLGHANFRSIQKSLKKNAVTYLKESDIEWSNASTYQCPDC. In terms of domain architecture, Integrase catalytic spans 656–831; it reads ESYEPFQYLH…AGLDITTILP (176 aa). Positions 667 and 732 each coordinate Mg(2+). Composition is skewed to polar residues over residues 916–929, 1009–1024, and 1065–1082; these read FIEQNETEQSYDQN, ESDTTSPRHSSTFTAR, and QRNSDTNIKYRTTNSTPS. 3 disordered regions span residues 916–935, 1005–1038, and 1057–1205; these read FIEQNETEQSYDQNTESDHD, GGTIESDTTSPRHSSTFTARNQKRPGSPNDMIDL, and GGTE…TEIE. The Bipartite nuclear localization signal signature appears at 1193 to 1227; sequence KKRSLEDNETEIEVSRDTWNNKNMRSLEPPRSKKR. The Reverse transcriptase Ty1/copia-type domain maps to 1353–1491; that stretch reads NDYYITQLDI…DILGLEIKYQ (139 aa). Residues D1361, D1442, D1443, D1625, E1667, and D1700 each contribute to the Mg(2+) site. Residues 1625-1767 enclose the RNase H Ty1/copia-type domain; sequence DASYGNQPYY…IKTFKLLTNK (143 aa).

In terms of assembly, the capsid protein forms a homotrimer, from which the VLPs are assembled. The protease is a homodimer, whose active site consists of two apposed aspartic acid residues. In terms of processing, initially, virus-like particles (VLPs) are composed of the structural unprocessed proteins Gag and Gag-Pol, and also contain the host initiator methionine tRNA (tRNA(i)-Met) which serves as a primer for minus-strand DNA synthesis, and a dimer of genomic Ty RNA. Processing of the polyproteins occurs within the particle and proceeds by an ordered pathway, called maturation. First, the protease (PR) is released by autocatalytic cleavage of the Gag-Pol polyprotein, and this cleavage is a prerequisite for subsequent processing at the remaining sites to release the mature structural and catalytic proteins. Maturation takes place prior to the RT reaction and is required to produce transposition-competent VLPs.

It localises to the cytoplasm. It is found in the nucleus. The enzyme catalyses DNA(n) + a 2'-deoxyribonucleoside 5'-triphosphate = DNA(n+1) + diphosphate. The catalysed reaction is Endonucleolytic cleavage to 5'-phosphomonoester.. Its function is as follows. Capsid protein (CA) is the structural component of the virus-like particle (VLP), forming the shell that encapsulates the retrotransposons dimeric RNA genome. The particles are assembled from trimer-clustered units and there are holes in the capsid shells that allow for the diffusion of macromolecules. CA also has nucleocapsid-like chaperone activity, promoting primer tRNA(i)-Met annealing to the multipartite primer-binding site (PBS), dimerization of Ty2 RNA and initiation of reverse transcription. The aspartyl protease (PR) mediates the proteolytic cleavages of the Gag and Gag-Pol polyproteins after assembly of the VLP. In terms of biological role, reverse transcriptase/ribonuclease H (RT) is a multifunctional enzyme that catalyzes the conversion of the retro-elements RNA genome into dsDNA within the VLP. The enzyme displays a DNA polymerase activity that can copy either DNA or RNA templates, and a ribonuclease H (RNase H) activity that cleaves the RNA strand of RNA-DNA heteroduplexes during plus-strand synthesis and hydrolyzes RNA primers. The conversion leads to a linear dsDNA copy of the retrotransposon that includes long terminal repeats (LTRs) at both ends. Functionally, integrase (IN) targets the VLP to the nucleus, where a subparticle preintegration complex (PIC) containing at least integrase and the newly synthesized dsDNA copy of the retrotransposon must transit the nuclear membrane. Once in the nucleus, integrase performs the integration of the dsDNA into the host genome. The protein is Transposon Ty2-OR1 Gag-Pol polyprotein (TY2B-OR1) of Saccharomyces cerevisiae (strain ATCC 204508 / S288c) (Baker's yeast).